Here is a 205-residue protein sequence, read N- to C-terminus: Urease accessory protein UreG (205 aa).

12-19 is a GTP binding site; the sequence is GPVGSGKT.

It belongs to the SIMIBI class G3E GTPase family. UreG subfamily. In terms of assembly, homodimer. UreD, UreF and UreG form a complex that acts as a GTP-hydrolysis-dependent molecular chaperone, activating the urease apoprotein by helping to assemble the nickel containing metallocenter of UreC. The UreE protein probably delivers the nickel.

The protein resides in the cytoplasm. Functionally, facilitates the functional incorporation of the urease nickel metallocenter. This process requires GTP hydrolysis, probably effectuated by UreG. The protein is Urease accessory protein UreG of Pseudomonas savastanoi pv. phaseolicola (strain 1448A / Race 6) (Pseudomonas syringae pv. phaseolicola (strain 1448A / Race 6)).